The sequence spans 1505 residues: Homeobox protein cut-like 1 (1505 aa).

Residues 56–407 (LLKSFQGEID…ALRISNSDLS (352 aa)) are a coiled coil. Polar residues-rich tracts occupy residues 396 to 407 (NAALRISNSDLS) and 440 to 451 (EQASNTNGTHQF). Disordered stretches follow at residues 396-455 (NAAL…SPAG), 512-552 (YSTN…EEMD), 646-669 (PKRRNGSEGNITTRIRASETGSDE), and 682-704 (LQVQKTAEPAQPSSASGSGNSDD). Over residues 516-546 (SISSQSPLQQSPDVNGMAPSPSQSESAGSVS) the composition is skewed to low complexity. The residue at position 540 (Glu-540) is a Phosphoserine. The CUT 1 DNA-binding region spans 542-629 (AGSVSEGEEM…ILALRSIQGR (88 aa)). Low complexity predominate over residues 694–703 (SSASGSGNSD). Ser-763 carries the post-translational modification Phosphoserine. A disordered region spans residues 768 to 802 (SAAPEAGASALPNPPALKKEAQDAPGLDPQGAADC). Glycyl lysine isopeptide (Lys-Gly) (interchain with G-Cter in SUMO2) cross-links involve residues Lys-785, Lys-811, and Lys-842. Residues 815–853 (GRSGAWKDHWWSAVQPERRNAASSEEAKAEETGGGKEKG) show a composition bias toward basic and acidic residues. A disordered region spans residues 815 to 930 (GRSGAWKDHW…KPTKPSVPPL (116 aa)). Polar residues-rich tracts occupy residues 868-877 (SQLQGPSSSE) and 887-911 (SPYSQSSELSLTGASRSETPQNSPL). Position 909 is a phosphoserine (Ser-909). A DNA-binding region (CUT 2) is located at residues 934 to 1021 (QYEVYMYQEV…QGVLPVQGQQ (88 aa)). The span at 1036–1049 (LQQGCVSSESTPKT) shows a compositional bias: polar residues. The tract at residues 1036-1110 (LQQGCVSSES…QPTTPLPLSG (75 aa)) is disordered. The span at 1050–1066 (SASCSPAPESPMSSSES) shows a compositional bias: low complexity. Ser-1059 and Ser-1069 each carry phosphoserine. Residues 1117–1204 (QELVAMSPEL…VEKLMDMKRM (88 aa)) constitute a DNA-binding region (CUT 3). Residues 1210–1247 (MKRRHSSVSDSQPCEPPSVGTEYSQGASPQPQHQLKKP) form a disordered region. Polar residues predominate over residues 1230–1242 (TEYSQGASPQPQH). The segment at residues 1244–1303 (LKKPRVVLAPEEKEALKRAYQQKPYPSPKTIEDLATQLNLKTSTVINWFHNYRSRIRREL) is a DNA-binding region (homeobox). A Phosphoserine modification is found at Ser-1270. A Glycyl lysine isopeptide (Lys-Gly) (interchain with G-Cter in SUMO2) cross-link involves residue Lys-1284. Positions 1312–1480 (SQGQAGASDS…SRDNPLRKKK (169 aa)) are disordered. Low complexity predominate over residues 1316–1333 (AGASDSPSARSGRAAPSS). Ser-1337 is subject to Phosphoserine. 2 stretches are compositionally biased toward basic and acidic residues: residues 1353–1368 (EEPKSQGEAEREEVPR) and 1384–1394 (DDARDDDHEGG). 2 stretches are compositionally biased toward low complexity: residues 1405–1436 (PASATATAAPAAPEDAATSAAAAPGEGPAAPS) and 1443–1455 (NSSSSSAPRRPSS). Position 1455 is a phosphoserine (Ser-1455). Residues 1467-1476 (GARDSRDNPL) are compositionally biased toward basic and acidic residues. 2 positions are modified to phosphoserine: Ser-1486 and Ser-1496.

Belongs to the CUT homeobox family. In terms of assembly, interacts with BANP. Interacts with SATB1 (via DNA-binding domains); the interaction inhibits the attachment of both proteins to DNA. In terms of processing, phosphorylated by PKA. Post-translationally, as cells progress into S phase, a fraction of CUX1 molecules is proteolytically processed into N-terminally truncated proteins of 110 kDa by CTSL. Cell cycle-dependent processing of CUX1 serves to generate a CDP/Cux p110 with distinct DNA binding and transcriptional properties.

The protein localises to the nucleus. In terms of biological role, transcription factor involved in the control of neuronal differentiation in the brain. Regulates dendrite development and branching, and dendritic spine formation in cortical layers II-III. Also involved in the control of synaptogenesis. In addition, it has probably a broad role in mammalian development as a repressor of developmentally regulated gene expression. May act by preventing binding of positively-activing CCAAT factors to promoters. Component of nf-munr repressor; binds to the matrix attachment regions (MARs) (5' and 3') of the immunoglobulin heavy chain enhancer. Represses T-cell receptor (TCR) beta enhancer function by binding to MARbeta, an ATC-rich DNA sequence located upstream of the TCR beta enhancer. Binds to the TH enhancer; may require the basic helix-loop-helix protein TCF4 as a coactivator. Its function is as follows. Plays a role in cell cycle progression, in particular at the G1/S transition. As cells progress into S phase, a fraction of CUX1 molecules is proteolytically processed into N-terminally truncated proteins of 110 kDa. While CUX1 only transiently binds to DNA and carries the CCAAT-displacement activity, CDP/Cux p110 makes a stable interaction with DNA and stimulates expression of genes such as POLA1. This is Homeobox protein cut-like 1 from Homo sapiens (Human).